The following is a 140-amino-acid chain: Large ribosomal subunit protein bL17 (140 aa).

This sequence belongs to the bacterial ribosomal protein bL17 family. Part of the 50S ribosomal subunit. Contacts protein L32.

The chain is Large ribosomal subunit protein bL17 from Roseobacter denitrificans (strain ATCC 33942 / OCh 114) (Erythrobacter sp. (strain OCh 114)).